A 361-amino-acid chain; its full sequence is Peptide chain release factor 1 (361 aa).

Glutamine 237 is subject to N5-methylglutamine. The span at 286–296 (EKRRSAEESTR) shows a compositional bias: basic and acidic residues. The interval 286-305 (EKRRSAEESTRRNLVSSGDR) is disordered.

Belongs to the prokaryotic/mitochondrial release factor family. In terms of processing, methylated by PrmC. Methylation increases the termination efficiency of RF1.

Its subcellular location is the cytoplasm. Peptide chain release factor 1 directs the termination of translation in response to the peptide chain termination codons UAG and UAA. The sequence is that of Peptide chain release factor 1 from Shewanella pealeana (strain ATCC 700345 / ANG-SQ1).